The sequence spans 278 residues: Deoxyuridine 5'-triphosphate nucleotidohydrolase (278 aa).

Substrate contacts are provided by residues 171–173 and 273–274; these read RSG and FG.

The protein belongs to the dUTPase family. Requires Mg(2+) as cofactor.

It carries out the reaction dUTP + H2O = dUMP + diphosphate + H(+). In terms of biological role, involved in nucleotide metabolism: produces dUMP, the immediate precursor of thymidine nucleotides and decreases the intracellular concentration of dUTP to avoid uracil incorporation into viral DNA. This Homo sapiens (Human) protein is Deoxyuridine 5'-triphosphate nucleotidohydrolase.